A 255-amino-acid polypeptide reads, in one-letter code: Small ribosomal subunit protein uS2 (255 aa).

Positions 230–255 are disordered; sequence QSSSGRDLGASSEVPVEPALEEAAEG.

It belongs to the universal ribosomal protein uS2 family.

The chain is Small ribosomal subunit protein uS2 from Rhizobium leguminosarum bv. trifolii (strain WSM2304).